Consider the following 135-residue polypeptide: Large ribosomal subunit protein uL16c (135 aa).

The protein belongs to the universal ribosomal protein uL16 family. As to quaternary structure, part of the 50S ribosomal subunit.

The protein localises to the plastid. Its subcellular location is the chloroplast. In Ranunculus macranthus (Large buttercup), this protein is Large ribosomal subunit protein uL16c.